The sequence spans 332 residues: Fructose-1,6-bisphosphatase class 1 (332 aa).

4 residues coordinate Mg(2+): E89, D110, L112, and D113. Substrate-binding positions include 113–116, N206, Y239, 257–259, and K269; these read DGSS and YLY. Position 275 (E275) interacts with Mg(2+).

The protein belongs to the FBPase class 1 family. As to quaternary structure, homotetramer. Mg(2+) serves as cofactor.

The protein resides in the cytoplasm. The enzyme catalyses beta-D-fructose 1,6-bisphosphate + H2O = beta-D-fructose 6-phosphate + phosphate. Its pathway is carbohydrate biosynthesis; gluconeogenesis. The polypeptide is Fructose-1,6-bisphosphatase class 1 (Shigella sonnei (strain Ss046)).